Consider the following 436-residue polypeptide: Elongation factor 1-alpha (436 aa).

The 225-residue stretch at 8 to 232 (KPHLNMIVTG…DDFKMAEKPV (225 aa)) folds into the tr-type G domain. Positions 17 to 24 (GHIDNGKS) are G1. GTP is bound at residue 17–24 (GHIDNGKS). Position 24 (S24) interacts with Mg(2+). The interval 74 to 78 (GITID) is G2. Positions 95 to 98 (DAPG) are G3. GTP is bound by residues 95–99 (DAPGH) and 157–160 (NKMD). Positions 157-160 (NKMD) are G4. The tract at residues 196–198 (SGW) is G5.

Belongs to the TRAFAC class translation factor GTPase superfamily. Classic translation factor GTPase family. EF-Tu/EF-1A subfamily.

The protein localises to the cytoplasm. It carries out the reaction GTP + H2O = GDP + phosphate + H(+). GTP hydrolase that promotes the GTP-dependent binding of aminoacyl-tRNA to the A-site of ribosomes during protein biosynthesis. The polypeptide is Elongation factor 1-alpha (Cenarchaeum symbiosum (strain A)).